A 228-amino-acid chain; its full sequence is MATVMELKATARPKSGKGAARAERRAGRVPAVIYGNKQPPQPISVEEPELRQRILAGRFLTTIFDINLDGKKHRVIPRDFHLDPVKDFPIHVDFMRLGEGATIRVSVPLRLLKADVAPGVKRGGTVNLVTHAIDVECAAESIPQFIEADVGALEISHSLHLSDLQLPPGVKPLAREDVTLVTIVPPSGYAEELKAAAAAGAAAPAAGAAPAAAAAGAKAPAGGGDKKK.

Residues 1–24 (MATVMELKATARPKSGKGAARAER) are disordered.

It belongs to the bacterial ribosomal protein bL25 family. CTC subfamily. In terms of assembly, part of the 50S ribosomal subunit; part of the 5S rRNA/L5/L18/L25 subcomplex. Contacts the 5S rRNA. Binds to the 5S rRNA independently of L5 and L18.

Functionally, this is one of the proteins that binds to the 5S RNA in the ribosome where it forms part of the central protuberance. In Nitrobacter winogradskyi (strain ATCC 25391 / DSM 10237 / CIP 104748 / NCIMB 11846 / Nb-255), this protein is Large ribosomal subunit protein bL25.